A 1372-amino-acid chain; its full sequence is DNA-directed RNA polymerase subunit beta (1372 aa).

The protein belongs to the RNA polymerase beta chain family. In terms of assembly, the RNAP catalytic core consists of 2 alpha, 1 beta, 1 beta' and 1 omega subunit. When a sigma factor is associated with the core the holoenzyme is formed, which can initiate transcription.

The catalysed reaction is RNA(n) + a ribonucleoside 5'-triphosphate = RNA(n+1) + diphosphate. Functionally, DNA-dependent RNA polymerase catalyzes the transcription of DNA into RNA using the four ribonucleoside triphosphates as substrates. The protein is DNA-directed RNA polymerase subunit beta of Nitratidesulfovibrio vulgaris (strain DSM 19637 / Miyazaki F) (Desulfovibrio vulgaris).